Here is a 714-residue protein sequence, read N- to C-terminus: Polyribonucleotide nucleotidyltransferase (714 aa).

Positions 493 and 499 each coordinate Mg(2+). The region spanning 559-618 (PRIETTKIPADRIGELIGPGGKNIKAIQAESGADINIEEDGTVHIYAAKQEGLDRALELV) is the KH domain. Positions 628-696 (GELYTGKIVS…DKGRVKMSIR (69 aa)) constitute an S1 motif domain.

The protein belongs to the polyribonucleotide nucleotidyltransferase family. Requires Mg(2+) as cofactor.

The protein localises to the cytoplasm. The catalysed reaction is RNA(n+1) + phosphate = RNA(n) + a ribonucleoside 5'-diphosphate. Its function is as follows. Involved in mRNA degradation. Catalyzes the phosphorolysis of single-stranded polyribonucleotides processively in the 3'- to 5'-direction. The polypeptide is Polyribonucleotide nucleotidyltransferase (Akkermansia muciniphila (strain ATCC BAA-835 / DSM 22959 / JCM 33894 / BCRC 81048 / CCUG 64013 / CIP 107961 / Muc)).